Here is a 207-residue protein sequence, read N- to C-terminus: MRPLTPRQAEILDLIKRNIAETGMPPTRAEIASRLGFKSANAAEEHLKALAKKGCIEIMPGTSRGIRLAGDELEDQPDPGLPLIGQVAAGEPILAQEHVEQYYQVDPAMFRPHADFLLRVRGDSMKDIGILDGDLLAVHKMNQARNGQVVVARVEDDVTVKRFEKQGNVVYLHAENEAFAPIRVDLANQSLTIEGLAVGVIRNGDWL.

The H-T-H motif DNA-binding region spans 28–48 (RAEIASRLGFKSANAAEEHLK). Residues S124 and K161 each act as for autocatalytic cleavage activity in the active site.

This sequence belongs to the peptidase S24 family. Homodimer.

The enzyme catalyses Hydrolysis of Ala-|-Gly bond in repressor LexA.. In terms of biological role, represses a number of genes involved in the response to DNA damage (SOS response), including recA and lexA. In the presence of single-stranded DNA, RecA interacts with LexA causing an autocatalytic cleavage which disrupts the DNA-binding part of LexA, leading to derepression of the SOS regulon and eventually DNA repair. This is LexA repressor from Shewanella amazonensis (strain ATCC BAA-1098 / SB2B).